Here is a 147-residue protein sequence, read N- to C-terminus: Large ribosomal subunit protein uL13 (147 aa).

Belongs to the universal ribosomal protein uL13 family. In terms of assembly, part of the 50S ribosomal subunit.

Functionally, this protein is one of the early assembly proteins of the 50S ribosomal subunit, although it is not seen to bind rRNA by itself. It is important during the early stages of 50S assembly. The sequence is that of Large ribosomal subunit protein uL13 from Lactiplantibacillus plantarum (strain ATCC BAA-793 / NCIMB 8826 / WCFS1) (Lactobacillus plantarum).